Here is a 164-residue protein sequence, read N- to C-terminus: Transcription elongation factor GreA (164 aa).

Belongs to the GreA/GreB family.

Its function is as follows. Necessary for efficient RNA polymerase transcription elongation past template-encoded arresting sites. The arresting sites in DNA have the property of trapping a certain fraction of elongating RNA polymerases that pass through, resulting in locked ternary complexes. Cleavage of the nascent transcript by cleavage factors such as GreA or GreB allows the resumption of elongation from the new 3'terminus. GreA releases sequences of 2 to 3 nucleotides. The polypeptide is Transcription elongation factor GreA (Helicobacter acinonychis (strain Sheeba)).